A 465-amino-acid polypeptide reads, in one-letter code: Asparagine--tRNA ligase (465 aa).

The protein belongs to the class-II aminoacyl-tRNA synthetase family. As to quaternary structure, homodimer.

The protein localises to the cytoplasm. The enzyme catalyses tRNA(Asn) + L-asparagine + ATP = L-asparaginyl-tRNA(Asn) + AMP + diphosphate + H(+). The chain is Asparagine--tRNA ligase from Pseudoalteromonas atlantica (strain T6c / ATCC BAA-1087).